We begin with the raw amino-acid sequence, 457 residues long: Argininosuccinate lyase (457 aa).

Belongs to the lyase 1 family. Argininosuccinate lyase subfamily.

It localises to the cytoplasm. The enzyme catalyses 2-(N(omega)-L-arginino)succinate = fumarate + L-arginine. It participates in amino-acid biosynthesis; L-arginine biosynthesis; L-arginine from L-ornithine and carbamoyl phosphate: step 3/3. In Escherichia coli O139:H28 (strain E24377A / ETEC), this protein is Argininosuccinate lyase.